Reading from the N-terminus, the 179-residue chain is Large ribosomal subunit protein uL5 (179 aa).

Belongs to the universal ribosomal protein uL5 family. As to quaternary structure, part of the 50S ribosomal subunit; part of the 5S rRNA/L5/L18/L25 subcomplex. Contacts the 5S rRNA and the P site tRNA. Forms a bridge to the 30S subunit in the 70S ribosome.

In terms of biological role, this is one of the proteins that bind and probably mediate the attachment of the 5S RNA into the large ribosomal subunit, where it forms part of the central protuberance. In the 70S ribosome it contacts protein S13 of the 30S subunit (bridge B1b), connecting the 2 subunits; this bridge is implicated in subunit movement. Contacts the P site tRNA; the 5S rRNA and some of its associated proteins might help stabilize positioning of ribosome-bound tRNAs. This chain is Large ribosomal subunit protein uL5, found in Anaplasma marginale (strain Florida).